A 219-amino-acid polypeptide reads, in one-letter code: Alpha N-terminal protein methyltransferase 1 (219 aa).

S-adenosyl-L-methionine-binding positions include glycine 64, arginine 69, 111–112 (LQ), and glutamine 127.

This sequence belongs to the methyltransferase superfamily. NTM1 family.

The protein resides in the cytoplasm. The catalysed reaction is N-terminal L-alanyl-L-prolyl-L-lysyl-[protein] + 3 S-adenosyl-L-methionine = N-terminal N,N,N-trimethyl-L-alanyl-L-prolyl-L-lysyl-[protein] + 3 S-adenosyl-L-homocysteine + 3 H(+). The enzyme catalyses N-terminal L-seryl-L-prolyl-L-lysyl-[protein] + 3 S-adenosyl-L-methionine = N-terminal N,N,N-trimethyl-L-seryl-L-prolyl-L-lysyl-[protein] + 3 S-adenosyl-L-homocysteine + 3 H(+). It carries out the reaction N-terminal L-prolyl-L-prolyl-L-lysyl-[protein] + 2 S-adenosyl-L-methionine = N-terminal N,N-dimethyl-L-prolyl-L-prolyl-L-lysyl-[protein] + 2 S-adenosyl-L-homocysteine + 2 H(+). Alpha-N-methyltransferase that methylates the N-terminus of target proteins containing the N-terminal motif [Ala/Pro/Ser]-Pro-Lys when the initiator Met is cleaved. Specifically catalyzes mono-, di- or tri-methylation of exposed alpha-amino group of Ala or Ser residue in the [Ala/Ser]-Pro-Lys motif and mono- or di-methylation of Pro in the Pro-Pro-Lys motif. The sequence is that of Alpha N-terminal protein methyltransferase 1 (tae1) from Schizosaccharomyces pombe (strain 972 / ATCC 24843) (Fission yeast).